The primary structure comprises 450 residues: MATKSVLMLGSGFVTRPTLDVLTDSGIKVTVACRTLESAKKLSAGVQHSTPISLDVNDDAALDAEVAKHDLVISLIPYTFHATVIKSAIRQKKHVVTTSYVSPAMMELDQAAKDAGITVMNEIGLDPGIDHLYAIKTIEEVHAAGGKIKTFLSYCGGLPAPESSDNPLGYKFSWSSRGVLLALRNAASFYKDGKVTNVAGPELMATAKPYFIYPGFAFVAYPNRDSTPYKERYQIPEADNIVRGTLRYQGFPQFIKVLVDIGFLSDEEQPFLKEAIPWKEATQKIVKASSASEQDIVSTIVSNATFESTEEQKRIVAGLKWLGIFSDKKITPRGNALDTLCATLEEKMQFEEGERDLVMLQHKFEIENKDGSRETRTSSLCEYGAPIGSGGYSAMAKLVGVPCAVAVKFVLDGTISDRGVLAPMNSKINDPLMKELKEKYGIECKEKVVA.

NADP(+) is bound by residues 11-14 (SGFV), 33-35 (CRT), 55-56 (DV), isoleucine 76, 98-99 (TS), 125-127 (LDP), and serine 175. Residues 99–100 (SY) and aspartate 126 contribute to the L-saccharopine site. L-saccharopine contacts are provided by residues arginine 224 and 245–247 (TLR).

This sequence belongs to the saccharopine dehydrogenase family. Homodimer.

The enzyme catalyses L-saccharopine + NADP(+) + H2O = (S)-2-amino-6-oxohexanoate + L-glutamate + NADPH + H(+). The protein operates within amino-acid biosynthesis; L-lysine biosynthesis via AAA pathway; L-lysine from L-alpha-aminoadipate (fungal route): step 2/3. The protein is Saccharopine dehydrogenase [NADP(+), L-glutamate-forming] (LYS3) of Pyricularia oryzae (strain 70-15 / ATCC MYA-4617 / FGSC 8958) (Rice blast fungus).